The sequence spans 332 residues: ADP-L-glycero-D-manno-heptose-6-epimerase (332 aa).

NADP(+) is bound by residues 11–12 (FI), 32–33 (DN), Lys-39, Lys-54, 76–80 (EGACS), and Asn-93. Residue Tyr-140 is the Proton acceptor of the active site. Lys-144 provides a ligand contact to NADP(+). Asn-170 contributes to the substrate binding site. NADP(+)-binding residues include Val-171 and Lys-179. The Proton acceptor role is filled by Lys-179. Residues Arg-181, His-188, 202–205 (FEGS), Arg-215, and Tyr-294 each bind substrate.

Belongs to the NAD(P)-dependent epimerase/dehydratase family. HldD subfamily. Homopentamer. The cofactor is NADP(+).

The catalysed reaction is ADP-D-glycero-beta-D-manno-heptose = ADP-L-glycero-beta-D-manno-heptose. It participates in nucleotide-sugar biosynthesis; ADP-L-glycero-beta-D-manno-heptose biosynthesis; ADP-L-glycero-beta-D-manno-heptose from D-glycero-beta-D-manno-heptose 7-phosphate: step 4/4. Its function is as follows. Catalyzes the interconversion between ADP-D-glycero-beta-D-manno-heptose and ADP-L-glycero-beta-D-manno-heptose via an epimerization at carbon 6 of the heptose. This Dechloromonas aromatica (strain RCB) protein is ADP-L-glycero-D-manno-heptose-6-epimerase.